The chain runs to 496 residues: Solute carrier family 2, facilitated glucose transporter member 3 (496 aa).

Topologically, residues 1-10 (MGTQKVTPAL) are cytoplasmic. The chain crosses the membrane as a helical span at residues 11–32 (IFAITVATIGSFQFGYNTGVIN). The Extracellular segment spans residues 33–64 (APEKIIKEFINKTLTDKGNAPPSEVLLTSLWS). Asn-43 carries an N-linked (GlcNAc...) asparagine glycan. The helical transmembrane segment at 65 to 85 (LSVAIFSVGGMIGSFSVGLFV) threads the bilayer. Residues 86 to 90 (NRFGR) lie on the Cytoplasmic side of the membrane. Residues 91–111 (RNSMLIVNLLAVTGGCFMGLC) form a helical membrane-spanning segment. At 112 to 118 (KVAKSVE) the chain is on the extracellular side. Residues 119-142 (MLILGRLVIGLFCGLCTGFVPMYI) form a helical membrane-spanning segment. The Cytoplasmic portion of the chain corresponds to 143 to 153 (GEISPTALRGA). A helical transmembrane segment spans residues 154 to 174 (FGTLNQLGIVVGILVAQIFGL). Gln-159 lines the D-glucose pocket. Over 175 to 183 (EFILGSEEL) the chain is Extracellular. The helical transmembrane segment at 184-204 (WPLLLGFTILPAILQSAALPF) threads the bilayer. Residues 205-269 (CPESPRFLLI…LFRVSSYRQP (65 aa)) are Cytoplasmic-facing. Phosphothreonine is present on Thr-232. The chain crosses the membrane as a helical span at residues 270–290 (IIISIVLQLSQQLSGINAVFY). The interval 277–279 (QLS) is important for selectivity against fructose. D-glucose is bound by residues 280 to 281 (QQ) and Asn-286. The Extracellular portion of the chain corresponds to 291–304 (YSTGIFKDAGVQEP). Residues 305-325 (IYATIGAGVVNTIFTVVSLFL) form a helical membrane-spanning segment. Asn-315 contacts D-glucose. Over 326 to 331 (VERAGR) the chain is Cytoplasmic. Residues 332–352 (RTLHMIGLGGMAFCSTLMTVS) traverse the membrane as a helical segment. Over 353–363 (LLLKDNYNGMS) the chain is Extracellular. The helical transmembrane segment at 364–389 (FVCIGAILVFVAFFEIGPGPIPWFIV) threads the bilayer. Glu-378 and Trp-386 together coordinate D-glucose. Topologically, residues 390-399 (AELFSQGPRP) are cytoplasmic. The chain crosses the membrane as a helical span at residues 400–420 (AAMAVAGCSNWTSNFLVGLLF). Residues 421–429 (PSAAHYLGA) lie on the Extracellular side of the membrane. The chain crosses the membrane as a helical span at residues 430–450 (YVFIIFTGFLITFLAFTFFKV). Over 451 to 496 (PETRGRTFEDITRAFEGQAHGADRSGKDGVMEMNSIEPAKETTTNV) the chain is Cytoplasmic. Residues Ser-475 and Ser-485 each carry the phosphoserine modification. The residue at position 492 (Thr-492) is a Phosphothreonine.

This sequence belongs to the major facilitator superfamily. Sugar transporter (TC 2.A.1.1) family. Glucose transporter subfamily. As to quaternary structure, interacts with SMIM43; the interaction may promote SLC2A3-mediated glucose transport to meet the energy needs of mesendoderm differentiation. As to expression, highly expressed in brain. Expressed in many tissues.

The protein resides in the cell membrane. It is found in the perikaryon. It localises to the cell projection. The catalysed reaction is D-glucose(out) = D-glucose(in). It carries out the reaction D-galactose(in) = D-galactose(out). With respect to regulation, deoxyglucose transport is inhibited by D-glucose, D-galactose and maltose. Galactose transport is inhibited by D-glucose and maltose. Functionally, facilitative glucose transporter. Can also mediate the uptake of various other monosaccharides across the cell membrane. Mediates the uptake of glucose, 2-deoxyglucose, galactose, mannose, xylose and fucose, and probably also dehydroascorbate. Does not mediate fructose transport. Required for mesendoderm differentiation. The polypeptide is Solute carrier family 2, facilitated glucose transporter member 3 (Homo sapiens (Human)).